A 334-amino-acid chain; its full sequence is Ornithine carbamoyltransferase, catabolic (334 aa).

Residues 57–60 (STRT), Q84, R108, and 135–138 (HPTQ) contribute to the carbamoyl phosphate site. Residues N169, D233, and 237-238 (SM) contribute to the L-ornithine site. Carbamoyl phosphate-binding positions include 275–276 (CL) and R320.

Belongs to the aspartate/ornithine carbamoyltransferase superfamily. OTCase family.

Its subcellular location is the cytoplasm. The catalysed reaction is carbamoyl phosphate + L-ornithine = L-citrulline + phosphate + H(+). It functions in the pathway amino-acid degradation; L-arginine degradation via ADI pathway; carbamoyl phosphate from L-arginine: step 2/2. In terms of biological role, reversibly catalyzes the transfer of the carbamoyl group from carbamoyl phosphate (CP) to the N(epsilon) atom of ornithine (ORN) to produce L-citrulline. The sequence is that of Ornithine carbamoyltransferase, catabolic (arcB) from Salmonella typhimurium (strain LT2 / SGSC1412 / ATCC 700720).